A 114-amino-acid chain; its full sequence is MKFTVIITEAPYGKERAYSALRFALTALLEGIEVNIFLLENGVYVAKKEQNPSEVPNYLELLKNAIELGAVVKVCGPCCKARGLKEEDLIEGAKLATMHDLIAFVKESDNVVTF.

It to M.kandleri MK0008.

This is an uncharacterized protein from Methanocaldococcus jannaschii (strain ATCC 43067 / DSM 2661 / JAL-1 / JCM 10045 / NBRC 100440) (Methanococcus jannaschii).